A 295-amino-acid chain; its full sequence is Defective in cullin neddylation protein AAR3 (295 aa).

Residues 1-180 (MDSSPVSARF…LIDDFVEHMY (180 aa)) form the DCUN1 domain. The short motif at 214–221 (YRRPHTGL) is the Nuclear localization signal element. Positions 214–251 (YRRPHTGLRNIPGLKRKTSKKNDEEEEDEDEEVLETQN) are disordered. The segment covering 237–247 (EEEEDEDEEVL) has biased composition (acidic residues).

Its subcellular location is the nucleus. May contribute to the neddylation of all cullins by transferring NEDD8 from N-terminally acetylated NEDD8-conjugating E2s enzyme to different cullin C-terminal domain-RBX complexes; neddylation of cullins play an essential role in the regulation of SCF-type complexes activity. Regulates responses to the synthetic auxin 2,4-dichlorophenoxyacetic acid (2,4-D) in roots, probably by modulating the SCF(TIR1) ubiquitin E3 ligase complex-mediated proteolysis. The protein is Defective in cullin neddylation protein AAR3 of Arabidopsis thaliana (Mouse-ear cress).